A 93-amino-acid polypeptide reads, in one-letter code: Exodeoxyribonuclease 7 small subunit (93 aa).

Over residues 1 to 17 (MAKSSASSLSSAKPVAA) the composition is skewed to low complexity. The segment at 1-22 (MAKSSASSLSSAKPVAAGPDAS) is disordered.

This sequence belongs to the XseB family. As to quaternary structure, heterooligomer composed of large and small subunits.

It is found in the cytoplasm. It catalyses the reaction Exonucleolytic cleavage in either 5'- to 3'- or 3'- to 5'-direction to yield nucleoside 5'-phosphates.. In terms of biological role, bidirectionally degrades single-stranded DNA into large acid-insoluble oligonucleotides, which are then degraded further into small acid-soluble oligonucleotides. This chain is Exodeoxyribonuclease 7 small subunit, found in Polaromonas naphthalenivorans (strain CJ2).